Consider the following 101-residue polypeptide: NADH-quinone oxidoreductase subunit K (101 aa).

3 consecutive transmembrane segments (helical) span residues 4–24 (LAHYLVLGAILFAIAIVGIFL), 29–49 (IIIILMAIELMLLAVNTNFVA), and 61–81 (IFVFFVLTVAAAEAAIGLAIL).

The protein belongs to the complex I subunit 4L family. In terms of assembly, NDH-1 is composed of 14 different subunits. Subunits NuoA, H, J, K, L, M, N constitute the membrane sector of the complex.

It is found in the cell inner membrane. The catalysed reaction is a quinone + NADH + 5 H(+)(in) = a quinol + NAD(+) + 4 H(+)(out). NDH-1 shuttles electrons from NADH, via FMN and iron-sulfur (Fe-S) centers, to quinones in the respiratory chain. The immediate electron acceptor for the enzyme in this species is believed to be ubiquinone. Couples the redox reaction to proton translocation (for every two electrons transferred, four hydrogen ions are translocated across the cytoplasmic membrane), and thus conserves the redox energy in a proton gradient. The protein is NADH-quinone oxidoreductase subunit K of Burkholderia ambifaria (strain MC40-6).